Here is a 266-residue protein sequence, read N- to C-terminus: 3-methyl-2-oxobutanoate hydroxymethyltransferase (266 aa).

The Mg(2+) site is built by D45 and D84. 3-methyl-2-oxobutanoate-binding positions include 45–46 (DS), D84, and K113. Residue E115 coordinates Mg(2+). E183 serves as the catalytic Proton acceptor.

It belongs to the PanB family. In terms of assembly, homodecamer; pentamer of dimers. It depends on Mg(2+) as a cofactor.

The protein localises to the cytoplasm. The catalysed reaction is 3-methyl-2-oxobutanoate + (6R)-5,10-methylene-5,6,7,8-tetrahydrofolate + H2O = 2-dehydropantoate + (6S)-5,6,7,8-tetrahydrofolate. It participates in cofactor biosynthesis; (R)-pantothenate biosynthesis; (R)-pantoate from 3-methyl-2-oxobutanoate: step 1/2. Its function is as follows. Catalyzes the reversible reaction in which hydroxymethyl group from 5,10-methylenetetrahydrofolate is transferred onto alpha-ketoisovalerate to form ketopantoate. The chain is 3-methyl-2-oxobutanoate hydroxymethyltransferase from Coxiella burnetii (strain CbuG_Q212) (Coxiella burnetii (strain Q212)).